Reading from the N-terminus, the 285-residue chain is Taffazin (285 aa).

At 1–23 (MDSNNSNNNNKNLKQICDIPKPQ) the chain is on the mitochondrial intermembrane side. Residues 24 to 42 (FLSKGVFTLVGVLCKFWIS) lie within the membrane without spanning it. Over 43–285 (MNTVTTSGID…GRFSHPTIKD (243 aa)) the chain is Mitochondrial intermembrane. Residues 74-79 (HSSNLD) carry the HXXXXD motif motif.

It belongs to the taffazin family.

It localises to the mitochondrion outer membrane. The protein resides in the mitochondrion inner membrane. It carries out the reaction a 1-acyl-sn-glycero-3-phosphate + a 1,2-diacyl-sn-glycero-3-phospho-(1'-sn-glycerol) = 1-acyl-sn-glycero-3-phospho-(1'-sn-glycerol) + a 1,2-diacyl-sn-glycero-3-phosphate. The catalysed reaction is 1-hexadecanoyl-2-(9Z,12Z-octadecadienoyl)-sn-glycero-3-phospho-(1'-sn-glycerol) + 1-(9Z-octadecenoyl)-sn-glycero-3-phosphate = 1-(9Z)-octadecenoyl-2-(9Z,12Z)-octadecadienoyl-sn-glycero-3-phosphate + 1-hexadecanoyl-sn-glycero-3-phospho-(1'-sn-glycerol). The enzyme catalyses 1'-[1,2-diacyl-sn-glycero-3-phospho],3'-[1-acyl-sn-glycero-3-phospho]-glycerol + a 1,2-diacyl-sn-glycero-3-phosphocholine = a cardiolipin + a 1-acyl-sn-glycero-3-phosphocholine. It catalyses the reaction 1-hexadecanoyl-2-(9Z,12Z-octadecadienoyl)-sn-glycero-3-phosphocholine + 1-hexadecanoyl-sn-glycero-3-phosphocholine = 2-(9Z,12Z-octadecadienoyl)-sn-glycero-3-phosphocholine + 1,2-dihexadecanoyl-sn-glycero-3-phosphocholine. It carries out the reaction 1,2-di-(9Z-octadecenoyl)-sn-glycero-3-phosphocholine + 1-hexadecanoyl-sn-glycero-3-phosphocholine = 1-hexadecanoyl-2-(9Z-octadecenoyl)-sn-glycero-3-phosphocholine + 1-(9Z-octadecenoyl)-sn-glycero-3-phosphocholine. It participates in phospholipid metabolism. Acyltransferase required to remodel newly synthesized phospholipid cardiolipin (1',3'-bis-[1,2-diacyl-sn-glycero-3-phospho]-glycerol or CL), a key component of the mitochondrial inner membrane, with tissue specific acyl chains necessary for adequate mitochondrial function. Its role in cellular physiology is to improve mitochondrial performance. CL is critical for the coassembly of lipids and proteins in mitochondrial membranes, for instance, remodeling of the acyl groups of CL in the mitochondrial inner membrane affects the assembly and stability of respiratory chain complex IV and its supercomplex forms. Catalyzes the transacylation between phospholipids and lysophospholipids, with the highest rate being between phosphatidylcholine (1,2-diacyl-sn-glycero-3-phosphocholine or PC) and CL. Catalyzes both 1-acyl-sn-glycero-3-phosphocholine (lysophosphatidylcholine or LPC) reacylation and PC-CL transacylation, that means, it exchanges acyl groups between CL and PC by a combination of forward and reverse transacylations. Also catalyzes transacylations between other phospholipids such as phosphatidylethanolamine (1,2-diacyl-sn-glycero-3-phosphoethanolamine or PE) and CL, between PC and PE, and between PC and phosphatidate (1,2-diacyl-sn-glycero-3-phosphate or PA), although at lower rate. Not regiospecific, it transfers acyl groups into any of the sn-1 and sn-2 positions of the monolysocardiolipin (MLCL), which is an important prerequisite for uniformity and symmetry in CL acyl distribution. Cannot transacylate dilysocardiolipin (DLCL), thus, the role of MLCL is limited to that of an acyl acceptor. CoA-independent, it can reshuffle molecular species within a single phospholipid class. Redistributes fatty acids between MLCL, CL, and other lipids, which prolongs the half-life of CL. Its action is completely reversible, which allows for cyclic changes, such as fission and fusion or bending and flattening of the membrane. Hence, by contributing to the flexibility of the lipid composition, it plays an important role in the dynamics of mitochondria membranes. The chain is Taffazin (taz) from Dictyostelium discoideum (Social amoeba).